The sequence spans 138 residues: Abscisic stress-ripening protein 5 (138 aa).

The span at 1–13 shows a compositional bias: basic residues; the sequence is MAEEKHHHHLFHH. Disordered stretches follow at residues 1-27 and 106-138; these read MAEEKHHHHLFHHKKDDEPATGVDSYG and GAGGYAFHEHHEKKKDHKSAEESTGEKKHHLFG.

It belongs to the abscisic acid and water stress-induced protein family.

It is found in the nucleus. The protein localises to the cytoplasm. Its function is as follows. Involved in tolerance to aluminum. Regulates the expression of different genes that collectively contribute to the protection of the cell in response to aluminum stress. The sequence is that of Abscisic stress-ripening protein 5 from Oryza sativa subsp. indica (Rice).